Consider the following 323-residue polypeptide: MGEEVQMSDYDVSGDGDRVSEWEMGLPSDEDLASLSYSLIPPNLAMAFSITPERSRTIQDVNRASETTLSSLRGGSSGPNTSSSNNNVEEEDRVGSSSPGSDSKKQKTSNGDGDDGGGVDPDSAMAAEEGDSGTEDLSGKTLKRPRLVWTPQLHKRFVDVVAHLGIKNAVPKTIMQLMNVEGLTRENVASHLQKYRLYLKRMQGLTNEGPSASDKLFSSTPVPPQSFQDIGGGGGSSGNVGVPIPGAYGTQQMMQMPVYAHHMGMQGYHHQNHNHDPYHQNHRHHHGAGGNGAFESNPYMMQQNKFGSMASYPSVGGGSANEN.

3 disordered regions span residues 1–25, 53–139, and 267–298; these read MGEE…WEMG, ERSR…DLSG, and GYHH…ESNP. Residues 65–87 show a composition bias toward low complexity; that stretch reads SETTLSSLRGGSSGPNTSSSNNN. The myb-like GARP DNA-binding region spans 139 to 200; it reads GKTLKRPRLV…HLQKYRLYLK (62 aa).

In terms of assembly, interacts with ELF3 and forms a complex with ELF3 and ELF4.

The protein localises to the nucleus. Its function is as follows. Transcription factor that is essential for the generation of the circadian clock oscillation. Is necessary for activation of CCA1 and LHY expression. Is coregulated with TOC1 and seems to be repressed by CCA1 and LHY by direct binding of these proteins to the evening element in the LUX promoter. Directly regulates the expression of PRR9, a major component of the morning transcriptional feedback circuit, by binding specific sites on PRR9 promoter. Binds to its own promoter, inducing a negative auto-regulatory feedback loop within the core clock. Binds to ELF3 and associates with ELF4 in a diurnal complex which is required for the expression of the growth-promoting transcription factors PIF4 and PIF5 and subsequent hypocotyl growth in the early evening. The chain is Transcription factor LUX (LUX) from Arabidopsis thaliana (Mouse-ear cress).